A 336-amino-acid polypeptide reads, in one-letter code: Glycerol-3-phosphate dehydrogenase [NAD(P)+] (336 aa).

Positions 14, 15, 35, 36, and 109 each coordinate NADPH. Residues lysine 109 and glycine 139 each coordinate sn-glycerol 3-phosphate. Residue alanine 143 coordinates NADPH. Sn-glycerol 3-phosphate-binding residues include lysine 194, aspartate 247, serine 257, arginine 258, and asparagine 259. Lysine 194 acts as the Proton acceptor in catalysis. Arginine 258 is an NADPH binding site. Residue glutamate 284 participates in NADPH binding.

Belongs to the NAD-dependent glycerol-3-phosphate dehydrogenase family.

Its subcellular location is the cytoplasm. The catalysed reaction is sn-glycerol 3-phosphate + NAD(+) = dihydroxyacetone phosphate + NADH + H(+). It catalyses the reaction sn-glycerol 3-phosphate + NADP(+) = dihydroxyacetone phosphate + NADPH + H(+). Its pathway is membrane lipid metabolism; glycerophospholipid metabolism. Its function is as follows. Catalyzes the reduction of the glycolytic intermediate dihydroxyacetone phosphate (DHAP) to sn-glycerol 3-phosphate (G3P), the key precursor for phospholipid synthesis. In Streptomyces griseus subsp. griseus (strain JCM 4626 / CBS 651.72 / NBRC 13350 / KCC S-0626 / ISP 5235), this protein is Glycerol-3-phosphate dehydrogenase [NAD(P)+].